A 532-amino-acid chain; its full sequence is MGAAASRRRALRSEAMSSVAAKVRAARAFGEYLSQSHPENRNGADHLLADAYSGHDGSPEMQPAPQNKRRLSLVSNGRYEGSISDEAVSGKPAIEGPQPHVYTISREPALLPGSEAEAIELAVVKGRRQRERHPHHHSQPLRASPGSSREDISRPCQSWAGSRQGSKECPGCAQLVPGPSSRAFGLEQPPLPEAPGRHKKLERMYSVDGVSDDVPIRTWFPKENLFSFQTATTTMQAISVFRGYAERKRRKRENDSASVIQRNFRKHLRMVGSRRVKAQTFAERRERSFSRSWSDPTPMKADTSHDSRDSSDLQSSHCTLDEACEDLDWDTEKGLEAMACNTEGFLPPKVMLISSKVPKAEYIPTIIRRDDPSIIPILYDHEHATFEDILEEIEKKLNIYHKGAKIWKMLIFCQGGPGHLYLLKNKVATFAKVEKEEDMIHFWKRLSRLMSKVNPEPNVIHIMGCYILGNPNGEKLFQNLRTLMTPYKVTFESPLELSAQGKQMIETYFDFRLYRLWKSRQHSKLLDFDDVL.

The N-myristoyl glycine moiety is linked to residue Gly-2. Residues 2–235 are necessary and sufficient to elicit dendritic processes and synaptic contacts; the sequence is GAAASRRRAL…FSFQTATTTM (234 aa). 2 disordered regions span residues 34–67 and 127–174; these read SQSH…APQN and RRQR…GCAQ. Basic and acidic residues predominate over residues 38–48; it reads PENRNGADHLL. Basic residues predominate over residues 127–139; that stretch reads RRQRERHPHHHSQ. Polar residues predominate over residues 155–164; that stretch reads PCQSWAGSRQ. The residue at position 206 (Ser-206) is a Phosphoserine. The Nuclear localization signal signature appears at 249–252; that stretch reads RRKR. The tract at residues 275–315 is disordered; the sequence is RVKAQTFAERRERSFSRSWSDPTPMKADTSHDSRDSSDLQS. Phosphoserine occurs at positions 292 and 294. Residues 302 to 311 show a composition bias toward basic and acidic residues; that stretch reads DTSHDSRDSS.

It belongs to the NSMF family. As to quaternary structure, interacts with KPNA1; the interaction occurs in a calcium-independent manner after synaptic NMDA receptor stimulation and is required for nuclear import of NSMF but is competed by CABP1. Interacts (via the central NLS-containing motif region) with CABP1 (via EF-hands 1 and 2); the interaction occurs in a calcium-dependent manner after synaptic NMDA receptor stimulation and prevents the nuclear import of NSMF. Cannot be competed by calmodulin. Proteolytically processed after NMDA receptor activation. Cleaved in a calcium-dependent and calpain-sensitive manner. Calpain cleavage is essential for the translocation process from dendrites to the nucleus. As to expression, preferentially expressed in immature migratory, in comparison to postmigrating, gonadotropin-releasing hormone (GnRH) neuronal cell lines (at protein level). Expressed in adult brain and liver. In the brain, expressed in the primary pituitary gland, cortex, hippocampus, olfactory bulb and thalamus.

It localises to the nucleus. Its subcellular location is the nucleus envelope. The protein resides in the nucleus membrane. It is found in the nucleus matrix. The protein localises to the cytoplasm. It localises to the cell cortex. Its subcellular location is the cytoskeleton. The protein resides in the cell membrane. It is found in the cell projection. The protein localises to the dendrite. It localises to the synapse. Its subcellular location is the synaptosome. The protein resides in the postsynaptic density. It is found in the membrane. Couples NMDA-sensitive glutamate receptor signaling to the nucleus and triggers long-lasting changes in the cytoarchitecture of dendrites and spine synapse processes. Part of the cAMP response element-binding protein (CREB) shut-off signaling pathway. Stimulates outgrowth of olfactory axons and migration of gonadotropin-releasing hormone (GnRH) and luteinizing-hormone-releasing hormone (LHRH) neuronal cells. The polypeptide is NMDA receptor synaptonuclear signaling and neuronal migration factor (Nsmf) (Mus musculus (Mouse)).